The chain runs to 180 residues: Shikimate kinase (180 aa).

ATP is bound at residue 15 to 20; sequence GAGKTT. T19 is a binding site for Mg(2+). D37, R61, and G83 together coordinate substrate. ATP is bound at residue R121. R140 contributes to the substrate binding site.

The protein belongs to the shikimate kinase family. In terms of assembly, monomer. Mg(2+) is required as a cofactor.

The protein resides in the cytoplasm. It catalyses the reaction shikimate + ATP = 3-phosphoshikimate + ADP + H(+). Its pathway is metabolic intermediate biosynthesis; chorismate biosynthesis; chorismate from D-erythrose 4-phosphate and phosphoenolpyruvate: step 5/7. Catalyzes the specific phosphorylation of the 3-hydroxyl group of shikimic acid using ATP as a cosubstrate. This chain is Shikimate kinase, found in Psychrobacter sp. (strain PRwf-1).